Reading from the N-terminus, the 554-residue chain is DnaJ homolog subfamily C member 1 (554 aa).

The signal sequence occupies residues 1 to 47 (MTAPCSQPAQLPGRRQLGLVPFPPPPPRTPLLWLLLLLLAAVAPARG). At 48 to 153 (WESGDLELFD…RRVRKMSNAE (106 aa)) the chain is on the lumenal side. The 65-residue stretch at 65-129 (NFYQFLGVQQ…ERRQRYDDIL (65 aa)) folds into the J domain. Residues 154–174 (LALLLFIILTVGHYAVVWSIY) form a helical membrane-spanning segment. Topologically, residues 175–554 (LEKQLDELLS…LVQKKKQAKS (380 aa)) are cytoplasmic. The SANT 1 domain occupies 325–379 (KQAPEWTEEDLSQLTRSMVKFPGGTPGRWEKIAHELGRSVTDVTTKAKQLKDSVT). The residue at position 381 (Ser-381) is a Phosphoserine. Over residues 392–405 (STVQNSRPIKTATT) the composition is skewed to polar residues. A disordered region spans residues 392–500 (STVQNSRPIK…RSAEEPWTQN (109 aa)). The segment covering 421–432 (AAEEEQEGDSGE) has biased composition (acidic residues). Ser-430 is modified (phosphoserine). Basic and acidic residues predominate over residues 455-472 (AKPEPEEKSRAKRQKDFD). Acidic residues predominate over residues 473–482 (IAEQNESSDE). Phosphoserine occurs at positions 479, 480, 484, and 492. Over residues 483–494 (ESLRKERARSAE) the composition is skewed to basic and acidic residues. The SANT 2 domain occupies 492–547 (SAEEPWTQNQQKLLELALQQYPRGSSDRWDKIARCVPSKSKEDCIARYKLLVELVQ).

In terms of assembly, interacts (via J domain) with HSPA5. Interacts (via cytosolic domain) with ribosomes. Interacts (via SANT 2 domain) with SERPINA3; the interaction delays the formation of the covalent inhibitory complex SERPINA3-chymotrypsin, but does not alter the catalytic activity of SERPINA3. Interacts (via SANT 2 domain) with ITIH4 (via C-terminus); the interaction protects ITIH4 against in vitro cleavage by kallikrein.

It is found in the endoplasmic reticulum membrane. It localises to the nucleus membrane. The protein localises to the microsome membrane. May modulate protein synthesis. This Homo sapiens (Human) protein is DnaJ homolog subfamily C member 1 (DNAJC1).